Reading from the N-terminus, the 2078-residue chain is MPGEATETVPATEQELPQPQAETAVLPMSSALSVTAALGQPGPTLPPPCSPAPQQCPLSAANQASPFPSPSTIASTPLEVPFPQSSSGTALPLGTAPEAPTFLPNLIGPPISPAALALASPMIAPTLKGTPSSSAPLALVALAPHSVQKSSAFPPNLLTSPPSVAVAESGSVITLSAPIAPSEPKTNLNKVPSEVVPNPKGTPSPPCIVSTVPYHCVTPMASIQSGVASLPQTTPTTTLAIASPQVKDTTISSVLISPQNPGSLSLKGPVSPPAALSLSTQSLPVVTSSQKTAGPNTPPDFPISLGSHLAPLHQSSFGSVQLLGQTGPSALSDPTVKTISVDHSSTGASYPSQRSVIPPLPSRNEVVPATVAAFPVVAPSVDKGPSTISSITCSPSGSLNVATSFSLSPTTSLILKSSPNATYHYPLVAQMPVSSVGTTPLVVTNPCTIAAAPTTTFEVATCVSPPMSSGPISNIEPTSPAALVMAPVAPKEPSTQVATTLRIPVSPPLPDPEDLKNLPSSVLVKFPTQKDLQTVPASLEGAPFSPAQAGLTTKKDPTVLPLVQAAPKNSPSFQSTSSSPEIPLSPEATLAKKSLGEPLPIGKPASSMTSPLGVNSSASVIKTDSYAGPDSAGPLLKSSLITPTVAAFPLESADPAGVAPTTAKGTSTYTTTASPFLEGTVSLAPKNHPVKEGTLTTLPLVPTASENCPVAPSPQNTCAPLATLVLAPEIPKSVPSPSLPPAGTPPGTKKVDGISHTSALAPVASSPKECPTEDSGASATASSKGTLTYLADSPSPLGVSVSPQTKRPPTKKGSAGPDTPIGNLSSPVSPVEASFLPENSLSFQGSKDSPATTHSPTPPSPKGAPTPSAVTPLSPKGVTLPPKETPTPSVVNLPFPKEGPATPAPKQAPALSMTSSSPKKARATPAPKGIPASPSPKGAPTPPAATPPSPKGGPATPSPKWAPTPPAATPPSPKGGPATPSPKGAPTPPAATPPSPKGGPATPSPKGAPTPPAVTPPSPKGSPAATPFPKGASTPPAATPPSPKGSPAATPLPKGAPTTPAATLPSPKGGPATPSLKGAPTPPAATPPSPKGGPATPSPKGAPMPPAATPPSPKGGLATPPHKGAPTTPAATPPSPKGGLATPPPKGAPTTPAATPPSPKGGLATPPPKGAPTTPAATPPSPKGGLATPSPKGAPTTPAATPPSPKGGLATPSPKGAPTTPAATPPSPKGGLATPSPKGAPTTPAATPPSPKGGPATPPPKGAPTPPAATPPSLKGGLATPPHKGAPNPAVVTPPSPKGGPATSPPKGAPTPPAATPPSPKGSPGTPPPKGAPTPPAVTPPSPKGTPTLPATTPSSKGGPTTPSSKEGPTPPAATPSHKGGPAMTPPSPKRGPAIPSPKGDPTSPAVIPLSPKKAPATPVTREGAATPSKGDLTPPAVTPVSLKKAPATSAPKGGPATPSSKGDPTLPAVTPPSPKEPPAPKQVATSSSPKKAPATPAPMGAPTLPAVIPSSPKEVPATPSSRRDPIAPTATLLSKKTPATLAPKEALIPPAMTVPSPKKTPAIPTPKEAPATPSSKEASSPPAVTPSTYKGAPSPKELLIPPAVTSPSPKEAPTPPAVTPPSPEKGPATPAPKGTPTSPPVTPSSLKDSPTSPASVTCKMGATVPQASKGLPAKKGPTALKEVLVAPAPESTPIITAPTRKGPQTKKSSATSPPICPDPSAKNGSKGPLSTVAPAPLLPVQKDSSKTAKGKDASHSPKGPLAPPESKASTPLTAAAFEKVLPKPESASVSAAPSPPVSLPLAPSPVPTLPPKQQFLPSSPGLVLESPSKPLAPADEDELLPLIPPEPISGGVPFQSVLVNMPTPKSAGIPVPTPSAKQPVTKNNKGSGTESDSDESVPELEEQDSTQATTQQAQLAAAAEIDEEPVSKAKQSRSEKKARKAMSKLGLRQVTGVTRVTIRKSKNILFVITKPDVYKSPASDTYIVFGEAKIEDLSQQAQLAAAEKFKVQGEAVSNIQENTQTPTVQEESEEEEVDETGVEVKDIELVMSQANVSRAKAVRALKNNSNDIVNAIMELTM.

4 disordered regions span residues 1-21 (MPGE…QPQA), 37-96 (ALGQ…LGTA), 595-614 (LGEP…PLGV), and 732-1944 (KSVP…KAMS). Polar residues-rich tracts occupy residues 9 to 21 (VPAT…QPQA) and 60 to 75 (AANQ…TIAS). Over residues 775 to 786 (SGASATASSKGT) the composition is skewed to low complexity. Positions 837-847 (PENSLSFQGSK) are enriched in polar residues. S917 carries the phosphoserine modification. A compositionally biased stretch (pro residues) spans 933-1020 (SPSPKGAPTP…PPAVTPPSPK (88 aa)). Positions 1045–1067 (GSPAATPLPKGAPTTPAATLPSP) are enriched in low complexity. Residues 1080 to 1113 (PTPPAATPPSPKGGPATPSPKGAPMPPAATPPSP) show a composition bias toward pro residues. Over residues 1114 to 1130 (KGGLATPPHKGAPTTPA) the composition is skewed to low complexity. 2 stretches are compositionally biased toward pro residues: residues 1131–1147 (ATPP…PPKG) and 1154–1170 (ATPP…PPKG). At S1181 the chain carries Phosphoserine. Low complexity-rich tracts occupy residues 1183 to 1199 (KGGL…TTPA), 1206 to 1222 (KGGL…TTPA), and 1229 to 1245 (KGGL…TTPA). Composition is skewed to pro residues over residues 1246–1270 (ATPP…PAAT) and 1292–1344 (VTPP…PSPK). Over residues 1345 to 1366 (GTPTLPATTPSSKGGPTTPSSK) the composition is skewed to low complexity. A phosphoserine mark is found at S1397 and S1474. The segment covering 1470–1481 (VTPPSPKEPPAP) has biased composition (pro residues). Residues 1485 to 1507 (ATSSSPKKAPATPAPMGAPTLPA) show a composition bias toward low complexity. A compositionally biased stretch (pro residues) spans 1611–1625 (KEAPTPPAVTPPSPE). Residues 1626–1637 (KGPATPAPKGTP) show a composition bias toward low complexity. The segment covering 1647 to 1656 (LKDSPTSPAS) has biased composition (polar residues). Over residues 1744-1756 (DSSKTAKGKDASH) the composition is skewed to basic and acidic residues. Residues 1794-1811 (PSPPVSLPLAPSPVPTLP) are compositionally biased toward pro residues. Positions 1841 to 1845 (LPLIP) match the PXLXP motif. Positions 1876–1891 (SAKQPVTKNNKGSGTE) are enriched in polar residues. Over residues 1892–1905 (SDSDESVPELEEQD) the composition is skewed to acidic residues. At S1906 the chain carries Phosphoserine; by ILK1. Residues 1907-1920 (TQATTQQAQLAAAA) are compositionally biased toward low complexity. Residues 1932 to 1943 (QSRSEKKARKAM) form a required for DNA-binding region. Residues 1933–1998 (SRSEKKARKA…AKIEDLSQQA (66 aa)) enclose the NAC-A/B domain. Position 1995 is a phosphoserine (S1995). K2005 is modified (N6-acetyllysine; alternate). K2005 is covalently cross-linked (Glycyl lysine isopeptide (Lys-Gly) (interchain with G-Cter in SUMO2); alternate). T2022 is modified (phosphothreonine; by GSK3-beta). At T2024 the chain carries Phosphothreonine. Residues S2029, S2049, S2054, and S2066 each carry the phosphoserine modification. One can recognise a UBA domain in the interval 2039 to 2078 (VEVKDIELVMSQANVSRAKAVRALKNNSNDIVNAIMELTM).

Interacts (via PXLXP motif) with the muscle-restricted histone methyltransferase SMYD1 (via MYND-type zinc finger).

The protein resides in the cytoplasm. It localises to the nucleus. Functionally, cardiac- and muscle-specific transcription factor. May act to regulate the expression of genes involved in the development of myotubes. Plays a critical role in ventricular cardiomyocyte expansion and regulates postnatal skeletal muscle growth and regeneration. Involved in the organized assembly of thick and thin filaments of myofibril sarcomeres. This Homo sapiens (Human) protein is Nascent polypeptide-associated complex subunit alpha, muscle-specific form (NACA).